A 280-amino-acid chain; its full sequence is Elongation factor Ts (280 aa).

The tract at residues 79–82 is involved in Mg(2+) ion dislocation from EF-Tu; it reads TDFV.

This sequence belongs to the EF-Ts family.

It localises to the cytoplasm. Associates with the EF-Tu.GDP complex and induces the exchange of GDP to GTP. It remains bound to the aminoacyl-tRNA.EF-Tu.GTP complex up to the GTP hydrolysis stage on the ribosome. This Vibrio cholerae serotype O1 (strain ATCC 39541 / Classical Ogawa 395 / O395) protein is Elongation factor Ts.